We begin with the raw amino-acid sequence, 103 residues long: Large ribosomal subunit protein bL21 (103 aa).

This sequence belongs to the bacterial ribosomal protein bL21 family. As to quaternary structure, part of the 50S ribosomal subunit. Contacts protein L20.

Its function is as follows. This protein binds to 23S rRNA in the presence of protein L20. This is Large ribosomal subunit protein bL21 from Pseudomonas syringae pv. tomato (strain ATCC BAA-871 / DC3000).